The chain runs to 304 residues: 4-diphosphocytidyl-2-C-methyl-D-erythritol kinase (304 aa).

Lysine 20 is an active-site residue. 106–116 (PVASGIGGGSG) is a binding site for ATP. The active site involves aspartate 148.

Belongs to the GHMP kinase family. IspE subfamily.

It carries out the reaction 4-CDP-2-C-methyl-D-erythritol + ATP = 4-CDP-2-C-methyl-D-erythritol 2-phosphate + ADP + H(+). It functions in the pathway isoprenoid biosynthesis; isopentenyl diphosphate biosynthesis via DXP pathway; isopentenyl diphosphate from 1-deoxy-D-xylulose 5-phosphate: step 3/6. In terms of biological role, catalyzes the phosphorylation of the position 2 hydroxy group of 4-diphosphocytidyl-2C-methyl-D-erythritol. In Bartonella bacilliformis (strain ATCC 35685 / KC583 / Herrer 020/F12,63), this protein is 4-diphosphocytidyl-2-C-methyl-D-erythritol kinase.